A 466-amino-acid polypeptide reads, in one-letter code: Argininosuccinate lyase (466 aa).

Belongs to the lyase 1 family. Argininosuccinate lyase subfamily.

Its subcellular location is the cytoplasm. The enzyme catalyses 2-(N(omega)-L-arginino)succinate = fumarate + L-arginine. It participates in amino-acid biosynthesis; L-arginine biosynthesis; L-arginine from L-ornithine and carbamoyl phosphate: step 3/3. This chain is Argininosuccinate lyase, found in Bartonella tribocorum (strain CIP 105476 / IBS 506).